The primary structure comprises 564 residues: Ribulokinase (564 aa).

The protein belongs to the ribulokinase family.

The catalysed reaction is D-ribulose + ATP = D-ribulose 5-phosphate + ADP + H(+). The enzyme catalyses L-ribulose + ATP = L-ribulose 5-phosphate + ADP + H(+). It participates in carbohydrate degradation; L-arabinose degradation via L-ribulose; D-xylulose 5-phosphate from L-arabinose (bacterial route): step 2/3. The chain is Ribulokinase from Geobacillus thermodenitrificans (strain NG80-2).